A 78-amino-acid chain; its full sequence is Translational regulator CsrA (78 aa).

It belongs to the CsrA/RsmA family. As to quaternary structure, homodimer; the beta-strands of each monomer intercalate to form a hydrophobic core, while the alpha-helices form wings that extend away from the core.

It is found in the cytoplasm. In terms of biological role, a translational regulator that binds mRNA to regulate translation initiation and/or mRNA stability. Usually binds in the 5'-UTR at or near the Shine-Dalgarno sequence preventing ribosome-binding, thus repressing translation. Its main target seems to be the major flagellin gene, while its function is anatagonized by FliW. This Borrelia hermsii (strain HS1 / DAH) protein is Translational regulator CsrA.